A 230-amino-acid polypeptide reads, in one-letter code: Large ribosomal subunit protein bL25 (230 aa).

This sequence belongs to the bacterial ribosomal protein bL25 family. CTC subfamily. As to quaternary structure, part of the 50S ribosomal subunit; part of the 5S rRNA/L5/L18/L25 subcomplex. Contacts the 5S rRNA. Binds to the 5S rRNA independently of L5 and L18.

Its function is as follows. This is one of the proteins that binds to the 5S RNA in the ribosome where it forms part of the central protuberance. This is Large ribosomal subunit protein bL25 (rplY) from Rhodopseudomonas palustris (strain ATCC BAA-98 / CGA009).